Consider the following 1216-residue polypeptide: ATP-dependent helicase/nuclease subunit A (1216 aa).

The UvrD-like helicase ATP-binding domain occupies 26 to 488 (QKKTAEQIEA…ILLKENFRSS (463 aa)). 47-54 (ASAGSGKT) lines the ATP pocket. Positions 515-802 (KHQLVFANTK…ELMTIHKSKG (288 aa)) constitute a UvrD-like helicase C-terminal domain.

Belongs to the helicase family. AddA subfamily. Heterodimer of AddA and AddB/RexB. Mg(2+) is required as a cofactor.

The catalysed reaction is Couples ATP hydrolysis with the unwinding of duplex DNA by translocating in the 3'-5' direction.. It carries out the reaction ATP + H2O = ADP + phosphate + H(+). In terms of biological role, the heterodimer acts as both an ATP-dependent DNA helicase and an ATP-dependent, dual-direction single-stranded exonuclease. Recognizes the chi site generating a DNA molecule suitable for the initiation of homologous recombination. The AddA nuclease domain is required for chi fragment generation; this subunit has the helicase and 3' -&gt; 5' nuclease activities. This is ATP-dependent helicase/nuclease subunit A from Streptococcus pneumoniae (strain CGSP14).